The sequence spans 176 residues: ATP synthase subunit delta (176 aa).

It belongs to the ATPase delta chain family. As to quaternary structure, F-type ATPases have 2 components, F(1) - the catalytic core - and F(0) - the membrane proton channel. F(1) has five subunits: alpha(3), beta(3), gamma(1), delta(1), epsilon(1). F(0) has three main subunits: a(1), b(2) and c(10-14). The alpha and beta chains form an alternating ring which encloses part of the gamma chain. F(1) is attached to F(0) by a central stalk formed by the gamma and epsilon chains, while a peripheral stalk is formed by the delta and b chains.

It localises to the cell membrane. In terms of biological role, f(1)F(0) ATP synthase produces ATP from ADP in the presence of a proton or sodium gradient. F-type ATPases consist of two structural domains, F(1) containing the extramembraneous catalytic core and F(0) containing the membrane proton channel, linked together by a central stalk and a peripheral stalk. During catalysis, ATP synthesis in the catalytic domain of F(1) is coupled via a rotary mechanism of the central stalk subunits to proton translocation. Its function is as follows. This protein is part of the stalk that links CF(0) to CF(1). It either transmits conformational changes from CF(0) to CF(1) or is implicated in proton conduction. This chain is ATP synthase subunit delta, found in Hamiltonella defensa subsp. Acyrthosiphon pisum (strain 5AT).